Consider the following 602-residue polypeptide: VSPTSEQYDSLLRQMWERMDEGCGGTIYVIGQGSDGTEYGLSEADMEASYATVKSMAEQIEADVILLRERQEAGGRVRDYLVRKRVGDNDFLEVRVAVVGNVDAGKSTLLGVLTHGELDNGRGFARQKLFRHKHEIESGRTSSVGNDILGFDSEGNVVNKPDSHGGSLEWTKICEKSTKVITFIDLAGHEKYLKTTVFGMTGHLPDFCMLMVGSNAGIVGMTKEHLGLALALNVPVFVVVTKIDMCPANILQETLKLLQRLLKSPGCRKIPVLVQSKDDVIVTASNFSSERMCPIFQISNVTGENLDLLKMFLNLLSPRTSYREEEPAEFQIDDTYSVPGVGTVVSGTTLRGLIKLNDTLLLGPDPLGNFLSIAVKSIHRKRMPVKEVRGGQTASFALKKIKRSSIRKGMVMVSPRLNPQASWEFEAEILVLHHPTTISPRYQAMVHCGSIRQTATILSMDKDCLRTGDKATVHFRFIKTPEYLHIDQRLVFREGRTKAVGTITKLLQTTNNSPMNSKPQQIKMQSTKKGPLTKRDEGGPSGGPAVGAPPPGDEASSLGAGQPAASCNLQPQPKPSSGGRRRGGQRYKVKSQGACVTPASGC.

Serine 2 is subject to Phosphoserine. Residues 91 to 322 (FLEVRVAVVG…LNLLSPRTSY (232 aa)) enclose the tr-type G domain. A G1 region spans residues 100–107 (GNVDAGKS). 100 to 107 (GNVDAGKS) is a binding site for GTP. Residues 139–143 (GRTSS) form a G2 region. A G3 region spans residues 185–188 (DLAG). GTP-binding positions include 185 to 189 (DLAGH) and 241 to 244 (TKID). Residues 241-244 (TKID) form a G4 region. Positions 299–301 (SNV) are G5. Residues 506 to 528 (LLQTTNNSPMNSKPQQIKMQSTK) are compositionally biased toward polar residues. The tract at residues 506–602 (LLQTTNNSPM…GACVTPASGC (97 aa)) is disordered. Serine 513 is subject to Phosphoserine. Basic residues predominate over residues 579–589 (GRRRGGQRYKV).

It belongs to the TRAFAC class translation factor GTPase superfamily. Classic translation factor GTPase family. GTPBP1 subfamily. Interacts with EXOSC2/RRP4, EXOSC3/RRP40, EXOSC5/RRP46, HNRNPD, HNRNPR and SYNCRIP. Identified in a complex with AANAT mRNA, but does not bind mRNA by itself.

Its subcellular location is the cytoplasm. In terms of biological role, promotes degradation of target mRNA species. Plays a role in the regulation of circadian mRNA stability. Binds GTP and has GTPase activity. The protein is GTP-binding protein 1 (GTPBP1) of Pongo abelii (Sumatran orangutan).